Reading from the N-terminus, the 279-residue chain is MNTENKEITSNWFTNLRDLLCKEFEKIEEKYAQIKGLKPAKFVRTSWKRNGGGCGIMSLMKGEVFEKVGVNISTVFGEFSQEFRSEILGAELDGKFFATGISVVAHLKSPLIPAMHFNTRYIETSKNWFGGGGDLTPFYPEENETAKFHTAFKEACDKYDSSYYPKFKKQCDEYFYLRHRKEPRGVGGIFYDYLNSGNFEQDFAFTKDIGKALLSVYPEIVRSKLFLPWTAEQKEYQLIRRGRYVEFNLLYDRGTKFGLMTDGNVEAILMSLPPVVKFN.

Serine 102 provides a ligand contact to substrate. A divalent metal cation-binding residues include histidine 106 and histidine 116. The active-site Proton donor is histidine 116. Position 118-120 (118-120) interacts with substrate; the sequence is NTR. Residues histidine 149 and histidine 179 each contribute to the a divalent metal cation site. An important for dimerization region spans residues 244–279; sequence YVEFNLLYDRGTKFGLMTDGNVEAILMSLPPVVKFN.

Belongs to the aerobic coproporphyrinogen-III oxidase family. As to quaternary structure, homodimer. It depends on a divalent metal cation as a cofactor.

The protein localises to the cytoplasm. The enzyme catalyses coproporphyrinogen III + O2 + 2 H(+) = protoporphyrinogen IX + 2 CO2 + 2 H2O. Its pathway is porphyrin-containing compound metabolism; protoporphyrin-IX biosynthesis; protoporphyrinogen-IX from coproporphyrinogen-III (O2 route): step 1/1. In terms of biological role, involved in the heme biosynthesis. Catalyzes the aerobic oxidative decarboxylation of propionate groups of rings A and B of coproporphyrinogen-III to yield the vinyl groups in protoporphyrinogen-IX. This chain is Oxygen-dependent coproporphyrinogen-III oxidase, found in Rickettsia prowazekii (strain Madrid E).